Here is a 513-residue protein sequence, read N- to C-terminus: 2-isopropylmalate synthase (513 aa).

In terms of domain architecture, Pyruvate carboxyltransferase spans 4–268 (IKIFDTTLRD…ETGIKTELIY (265 aa)). Mn(2+) contacts are provided by Asp13, His203, His205, and Asn239. Residues 392-513 (KLVHFHVHTG…GLLRKNGGAE (122 aa)) form a regulatory domain region.

It belongs to the alpha-IPM synthase/homocitrate synthase family. LeuA type 1 subfamily. As to quaternary structure, homodimer. Mn(2+) is required as a cofactor.

It localises to the cytoplasm. It carries out the reaction 3-methyl-2-oxobutanoate + acetyl-CoA + H2O = (2S)-2-isopropylmalate + CoA + H(+). The protein operates within amino-acid biosynthesis; L-leucine biosynthesis; L-leucine from 3-methyl-2-oxobutanoate: step 1/4. Functionally, catalyzes the condensation of the acetyl group of acetyl-CoA with 3-methyl-2-oxobutanoate (2-ketoisovalerate) to form 3-carboxy-3-hydroxy-4-methylpentanoate (2-isopropylmalate). This Thermotoga petrophila (strain ATCC BAA-488 / DSM 13995 / JCM 10881 / RKU-1) protein is 2-isopropylmalate synthase.